Reading from the N-terminus, the 488-residue chain is MGRAFVYVILGGGVAAGYAALEFTRRGVSDGELCIISEEPVAPYERPALSKGFLLPEAPARLPSFHTCVGANDEKLTPKWYKDHGIELVLGTRVKSVDVRRKTLLSSTGETISYKFLIIATGARALKLEEFGVEGSDAENVCYLRDLADANRLATVIQSSSNGNAVVIGGGYIGMECAASLVINKINVTMVFPEAHCMARLFTPKIASLYEDYYRAKGVKFIKGTVLTSFEFDSNKKVTAVNLKDGSHLPADLVVVGIGIRPNTSLFEGQLTIEKGGIKVNSRMQSSDSSVYAIGDVATFPVKLFGEMRRLEHVDSARKSARHAVSAIMDPIKTGDFDYLPFFYSRVFAFSWQFYGDPTGDVVHFGEYEDGKSFGAYWVKKGHLVGSFLEGGTKEEYETISKATQLKPAVTIDLEELEREGLGFAHTVVSQQKVPEVKDIPSAEMVKQSASVVMIKKPLYVWHAATGVVVAASVAAFAFWYGRRRRRW.

Topologically, residues 1–3 (MGR) are cytoplasmic. Residues 4 to 24 (AFVYVILGGGVAAGYAALEFT) traverse the membrane as a helical segment. Residues 12–15 (GGVA), E39, R46, K51, and 145–146 (RD) contribute to the FAD site. Over 25–458 (RRGVSDGELC…SASVVMIKKP (434 aa)) the chain is Peroxisomal. NAD(+) is bound by residues 170 to 176 (GGYIGME), E194, R200, and G259. An NADP(+)-binding site is contributed by 172–176 (YIGME). NADP(+)-binding residues include R200 and G259. D296 provides a ligand contact to FAD. 312–313 (EH) is a binding site for NAD(+). 312–313 (EH) provides a ligand contact to NADP(+). An FAD-binding site is contributed by V314. Position 318 (R318) interacts with L-ascorbate. An FAD-binding site is contributed by Y344. Y344 provides a ligand contact to NAD(+). Y344 provides a ligand contact to NADP(+). R346 lines the L-ascorbate pocket. The chain crosses the membrane as a helical span at residues 459-479 (LYVWHAATGVVVAASVAAFAF). Residues 480 to 488 (WYGRRRRRW) are Cytoplasmic-facing.

It belongs to the FAD-dependent oxidoreductase family. The cofactor is FAD.

It is found in the peroxisome membrane. It carries out the reaction 2 monodehydro-L-ascorbate radical + NADH + H(+) = 2 L-ascorbate + NAD(+). Catalyzes the conversion of monodehydroascorbate to ascorbate, oxidizing NADH in the process. Involved in the detoxification of H(2)O(2) that escapes the peroxisome and causes oxidative damage to oil bodies. The chain is Monodehydroascorbate reductase 4, peroxisomal from Arabidopsis thaliana (Mouse-ear cress).